A 445-amino-acid polypeptide reads, in one-letter code: Adenylyltransferase and sulfurtransferase MOCS3 (445 aa).

The segment at 49 to 70 (LPPSAAAEVEPTGSPSSSSSAA) is disordered. Residues Gly106, Asp127, 134-138 (DNLHR), Lys151, and 170-171 (NN) contribute to the ATP site. 2 residues coordinate Zn(2+): Cys211 and Cys214. Cys228 functions as the Glycyl thioester intermediate; for adenylyltransferase activity in the catalytic mechanism. Residues Cys286 and Cys289 each coordinate Zn(2+). The Rhodanese domain maps to 342-443 (SGRPHLLVDV…WAKEVDPSFL (102 aa)). Catalysis depends on Cys403, which acts as the Cysteine persulfide intermediate; for sulfurtransferase activity.

In the N-terminal section; belongs to the HesA/MoeB/ThiF family. UBA4 subfamily. Requires Zn(2+) as cofactor.

The protein localises to the cytoplasm. Its subcellular location is the cytosol. The catalysed reaction is [molybdopterin-synthase sulfur-carrier protein]-C-terminal Gly-Gly + ATP + H(+) = [molybdopterin-synthase sulfur-carrier protein]-C-terminal Gly-Gly-AMP + diphosphate. The enzyme catalyses [molybdopterin-synthase sulfur-carrier protein]-C-terminal Gly-Gly-AMP + S-sulfanyl-L-cysteinyl-[cysteine desulfurase] + AH2 = [molybdopterin-synthase sulfur-carrier protein]-C-terminal-Gly-aminoethanethioate + L-cysteinyl-[cysteine desulfurase] + A + AMP + 2 H(+). It participates in tRNA modification; 5-methoxycarbonylmethyl-2-thiouridine-tRNA biosynthesis. Its pathway is cofactor biosynthesis; molybdopterin biosynthesis. Functionally, plays a central role in 2-thiolation of mcm(5)S(2)U at tRNA wobble positions of cytosolic tRNA(Lys), tRNA(Glu) and tRNA(Gln). Also essential during biosynthesis of the molybdenum cofactor. Acts by mediating the C-terminal thiocarboxylation of sulfur carriers URM1 and MOCS2A. Its N-terminus first activates URM1 and MOCS2A as acyl-adenylates (-COAMP), then the persulfide sulfur on the catalytic cysteine is transferred to URM1 and MOCS2A to form thiocarboxylation (-COSH) of their C-terminus. The reaction probably involves hydrogen sulfide that is generated from the persulfide intermediate and that acts as a nucleophile towards URM1 and MOCS2A. Subsequently, a transient disulfide bond is formed. Does not use thiosulfate as sulfur donor; NFS1 probably acting as a sulfur donor for thiocarboxylation reactions. This Oryza sativa subsp. japonica (Rice) protein is Adenylyltransferase and sulfurtransferase MOCS3.